Here is a 515-residue protein sequence, read N- to C-terminus: Slowpoke-binding protein (515 aa).

A disordered region spans residues 1–31 (MFKFNKAAQQQRIDNRNSAVTGHDPFVRPPV). The span at 7-20 (AAQQQRIDNRNSAV) shows a compositional bias: polar residues. Phosphoserine is present on residues serine 54 and serine 79. Polar residues predominate over residues 73–82 (SSNRSASSEQ). The interval 73–94 (SSNRSASSEQDNSDLSEHSEKS) is disordered. Positions 191 to 203 (NWFLVTDASVRTD) are interaction with Slo. A disordered region spans residues 483–503 (SLSEANSPCTPPSTPHDRRTG).

Interacts specifically with Slo; which activates Slo activity. Interacts with 14-3-3-zeta when phosphorylated. Forms a heterotetrameric complex containing phosphorylated Slob, Slo and 14-3-3-zeta, which represses Slo activity due to the indirect interaction between Slo and 14-3-3-zeta. Post-translationally, phosphorylated. Phosphorylation of Ser-54 and Ser-79 is required for the interaction with 14-3-3-zeta but not with that of Slo. In terms of tissue distribution, expressed in head. In larval brain, it is expressed in the mushroom body. Also expressed in larval muscles.

The protein localises to the cytoplasm. Regulator of calcium-activated channel Slo. Increases or decreases the voltage sensitivity of Slo, depending on the absence or presence of 14-3-3-zeta in the complex, respectively. The protein is Slowpoke-binding protein (Slob) of Drosophila melanogaster (Fruit fly).